Here is a 431-residue protein sequence, read N- to C-terminus: Gamma-glutamyl phosphate reductase (431 aa).

The protein belongs to the gamma-glutamyl phosphate reductase family.

The protein localises to the cytoplasm. It carries out the reaction L-glutamate 5-semialdehyde + phosphate + NADP(+) = L-glutamyl 5-phosphate + NADPH + H(+). It participates in amino-acid biosynthesis; L-proline biosynthesis; L-glutamate 5-semialdehyde from L-glutamate: step 2/2. Its function is as follows. Catalyzes the NADPH-dependent reduction of L-glutamate 5-phosphate into L-glutamate 5-semialdehyde and phosphate. The product spontaneously undergoes cyclization to form 1-pyrroline-5-carboxylate. The polypeptide is Gamma-glutamyl phosphate reductase (Methylobacterium nodulans (strain LMG 21967 / CNCM I-2342 / ORS 2060)).